We begin with the raw amino-acid sequence, 578 residues long: Protein LIKE EARLY STARVATION, chloroplastic (578 aa).

Residues 1 to 56 (MALRLGVSIGAALGSSHWDDGQRVRQRDFSASVNFTAPVTSRRSLRGSRTGVRILR) constitute a chloroplast transit peptide. 2 disordered regions span residues 146–166 (NNSGDGKEGFPNEDNTVTSEV) and 187–206 (SETSGTETPGPDFWSWTPPQ).

This sequence belongs to the ESV1 family. Expressed ubiquitously.

Its subcellular location is the plastid. The protein localises to the chloroplast stroma. Its function is as follows. Binds preferentially to highly ordered alpha-glucans, such as starch and crystalline maltodextrins. Involved in the organization of the starch granule matrix, thus influencing starch turnover by modulating the accessibility of starch polymers to modifying and degrading enzymes involved in phosphorylation, hydrolyzes and synthesis, including starch synthases (SSI and SSIII), starch phosphorylases (PHS1), isoamylase, beta-amylase, glucan water dikinase (GWD) and phosphoglucan water dikinase (PWD). The chain is Protein LIKE EARLY STARVATION, chloroplastic from Arabidopsis thaliana (Mouse-ear cress).